A 322-amino-acid chain; its full sequence is Nodulation protein Z (322 aa).

In terms of domain architecture, GT23 spans 1-314 (MYNRYVLSRR…NDPSRLVVIE (314 aa)).

This sequence belongs to the glycosyltransferase 23 family.

In terms of biological role, fucosyltransferase which adds the fucose moiety of the nod factor on its terminal reducing N-acetylglucosamine end. Uses GDP-fucose as the donor group. The sequence is that of Nodulation protein Z (nodZ) from Sinorhizobium fredii (strain NBRC 101917 / NGR234).